A 279-amino-acid chain; its full sequence is Isopentenyl-diphosphate delta-isomerase idi1 (279 aa).

Lys78 serves as a coordination point for substrate. His82 and His93 together coordinate Mg(2+). Residues 91–249 form the Nudix hydrolase domain; it reads LLHRAFSVFL…GLKFTPWFKL (159 aa). Gln111 and Lys116 together coordinate substrate. Residue Cys128 is part of the active site. Ser129 serves as a coordination point for substrate. The Nudix box signature appears at 129–162; it reads SHPLGIPGETGAELDAAVLGVKRAAQRKLDQELG. Mg(2+) is bound by residues Glu191 and Glu193. Glu193 is a catalytic residue.

This sequence belongs to the IPP isomerase type 1 family. Mg(2+) is required as a cofactor.

The catalysed reaction is isopentenyl diphosphate = dimethylallyl diphosphate. It functions in the pathway isoprenoid biosynthesis; dimethylallyl diphosphate biosynthesis; dimethylallyl diphosphate from isopentenyl diphosphate: step 1/1. In terms of biological role, isopentenyl-diphosphate delta-isomerase; part of the second module of ergosterol biosynthesis pathway that includes the middle steps of the pathway. Idi1 catalyzes the 1,3-allylic rearrangement of isopentenyl (IPP) to its highly electrophilic allylic isomer, dimethylallyl diphosphate (DMAPP). The second module is carried out in the vacuole and involves the formation of farnesyl diphosphate, which is also an important intermediate in the biosynthesis of ubiquinone, dolichol, heme and prenylated proteins. Activity by the mevalonate kinase erg12 (AFUA_4G07780) first converts mevalonate into 5-phosphomevalonate. 5-phosphomevalonate is then further converted to 5-diphosphomevalonate by the phosphomevalonate kinase erg8 (AFUA_5G10680). The diphosphomevalonate decarboxylase mvd1 (AFUA_4G07130) then produces isopentenyl diphosphate. The isopentenyl-diphosphate delta-isomerase idi1 (AFUA_6G11160) then catalyzes the 1,3-allylic rearrangement of the homoallylic substrate isopentenyl (IPP) to its highly electrophilic allylic isomer, dimethylallyl diphosphate (DMAPP). Finally the farnesyl diphosphate synthase erg20 (AFUA_5G02450) catalyzes the sequential condensation of isopentenyl pyrophosphate with dimethylallyl pyrophosphate, and then with the resultant geranylpyrophosphate to the ultimate product farnesyl pyrophosphate. The sequence is that of Isopentenyl-diphosphate delta-isomerase idi1 from Aspergillus fumigatus (strain ATCC MYA-4609 / CBS 101355 / FGSC A1100 / Af293) (Neosartorya fumigata).